Consider the following 5488-residue polypeptide: Polyketide synthase PksN (5488 aa).

The tract at residues arginine 3 to isoleucine 301 is condensation. A WD 1 repeat occupies glutamine 165–valine 205. Positions threonine 493–valine 903 are adenylation. One copy of the WD 2 repeat lies at arginine 965 to glycine 1006. Residues leucine 983–lysine 1058 enclose the Carrier 1 domain. Residue serine 1018 is modified to O-(pantetheine 4'-phosphoryl)serine. In terms of domain architecture, Ketosynthase family 3 (KS3) 1 spans aspartate 1089–glutamine 1515. Active-site for beta-ketoacyl synthase 1 activity residues include cysteine 1261, histidine 1397, and histidine 1437. An N-terminal hotdog fold 1 region spans residues histidine 1700 to arginine 1826. A PKS/mFAS DH 1 domain is found at histidine 1700 to threonine 1992. The active-site Proton acceptor; for dehydratase activity 1 is histidine 1729. Positions aspartate 1840 to threonine 1992 are C-terminal hotdog fold 1. The active-site Proton donor; for dehydratase activity 1 is aspartate 1900. The stretch at lysine 2165 to asparagine 2204 is one WD 3 repeat. Residues serine 2448–tyrosine 2525 enclose the Carrier 2 domain. Position 2485 is an O-(pantetheine 4'-phosphoryl)serine (serine 2485). The region spanning proline 2576 to glutamate 3012 is the Ketosynthase family 3 (KS3) 2 domain. Active-site for beta-ketoacyl synthase 2 activity residues include cysteine 2747, histidine 2882, and histidine 2928. Residues lysine 3038–valine 3109 adopt a coiled-coil conformation. The interval histidine 3207–asparagine 3332 is N-terminal hotdog fold 2. The PKS/mFAS DH 2 domain maps to histidine 3207–serine 3492. The active-site Proton acceptor; for dehydratase activity 2 is histidine 3236. The C-terminal hotdog fold 2 stretch occupies residues glutamine 3346–serine 3492. Aspartate 3408 serves as the catalytic Proton donor; for dehydratase activity 2. A coiled-coil region spans residues aspartate 3626–glycine 3655. A WD 4 repeat occupies glutamine 3666 to glutamine 3705. Positions aspartate 3952–tyrosine 4026 constitute a Carrier 3 domain. O-(pantetheine 4'-phosphoryl)serine is present on serine 3986. Residues proline 4076–glutamate 4511 enclose the Ketosynthase family 3 (KS3) 3 domain. Residues cysteine 4245, histidine 4380, and histidine 4427 each act as for beta-ketoacyl synthase 3 activity in the active site. Positions histidine 4706–aspartate 4830 are N-terminal hotdog fold 3. The region spanning histidine 4706 to proline 4988 is the PKS/mFAS DH 3 domain. The Proton acceptor; for dehydratase activity 3 role is filled by histidine 4735. The interval serine 4844 to proline 4988 is C-terminal hotdog fold 3. The Proton donor; for dehydratase activity 3 role is filled by aspartate 4906. The WD 5 repeat unit spans residues histidine 5206 to alanine 5244. The stretch at isoleucine 5275 to isoleucine 5303 forms a coiled coil.

The protein belongs to the ATP-dependent AMP-binding enzyme family. Pantetheine 4'-phosphate is required as a cofactor.

It is found in the cytoplasm. Its pathway is antibiotic biosynthesis; bacillaene biosynthesis. In terms of biological role, involved in some intermediate steps for the synthesis of the antibiotic polyketide bacillaene which is involved in secondary metabolism. This is Polyketide synthase PksN (pksN) from Bacillus subtilis (strain 168).